The primary structure comprises 110 residues: Small ribosomal subunit protein uS10 (110 aa).

This sequence belongs to the universal ribosomal protein uS10 family. As to quaternary structure, part of the 30S ribosomal subunit.

In terms of biological role, involved in the binding of tRNA to the ribosomes. The protein is Small ribosomal subunit protein uS10 of Ehrlichia ruminantium (strain Gardel).